Reading from the N-terminus, the 252-residue chain is 2-succinyl-6-hydroxy-2,4-cyclohexadiene-1-carboxylate synthase (252 aa).

It belongs to the AB hydrolase superfamily. MenH family. As to quaternary structure, monomer.

It catalyses the reaction 5-enolpyruvoyl-6-hydroxy-2-succinyl-cyclohex-3-ene-1-carboxylate = (1R,6R)-6-hydroxy-2-succinyl-cyclohexa-2,4-diene-1-carboxylate + pyruvate. The protein operates within quinol/quinone metabolism; 1,4-dihydroxy-2-naphthoate biosynthesis; 1,4-dihydroxy-2-naphthoate from chorismate: step 3/7. It functions in the pathway quinol/quinone metabolism; menaquinone biosynthesis. Catalyzes a proton abstraction reaction that results in 2,5-elimination of pyruvate from 2-succinyl-5-enolpyruvyl-6-hydroxy-3-cyclohexene-1-carboxylate (SEPHCHC) and the formation of 2-succinyl-6-hydroxy-2,4-cyclohexadiene-1-carboxylate (SHCHC). The chain is 2-succinyl-6-hydroxy-2,4-cyclohexadiene-1-carboxylate synthase from Escherichia coli O9:H4 (strain HS).